A 472-amino-acid chain; its full sequence is MNKTALKTRFAPSPSGLLHLGNIRTALFNALLARRSRGLFLLRIEDTDQERSSEEYVTALMEDLRWLALEWQEGPEVEGEAGPYRQSQRRSVYQADFQRLEAEKLAYPCFCSQEELERVRKRQLAAGQAPRYPGTCARLSPEEVEGKLAAGFKSALRFRVPSLTTIEFEDLVRGPQRFATGDIGDFIIRRTDGSPAFFFSNALDDALMGVTHVLRGEDHLTNTPRQILLLRALGLPIPRYGHIAMIVGRDGAPLSKRHGSRSVRELREAGYLPEALCNYLARLGHHYEDSGFLDLDTLAAQFDLARLGRAPARFDPQQLHHWQREALARCDLDTLERWLAPVAASQVPADKYQDFIETVRPNVVLPEDALHWAKVLFSEELVLKDGILPIIHEAGAQFFTQALAAVDGSGTDFKALAAQLKQTTGAKGRSLFLPLRAAFTGELDGPELARLLPLMGVARVRQRLQNCVDQSY.

The short motif at 12-22 (PSPSGLLHLGN) is the 'HIGH' region element. Positions 253-257 (PLSKR) match the 'KMSKS' region motif. Lysine 256 lines the ATP pocket.

It belongs to the class-I aminoacyl-tRNA synthetase family. Glutamate--tRNA ligase type 1 subfamily. As to quaternary structure, monomer.

The protein resides in the cytoplasm. It carries out the reaction tRNA(Glu) + L-glutamate + ATP = L-glutamyl-tRNA(Glu) + AMP + diphosphate. Functionally, catalyzes the attachment of glutamate to tRNA(Glu) in a two-step reaction: glutamate is first activated by ATP to form Glu-AMP and then transferred to the acceptor end of tRNA(Glu). The chain is Glutamate--tRNA ligase 2 from Nitrosococcus oceani (strain ATCC 19707 / BCRC 17464 / JCM 30415 / NCIMB 11848 / C-107).